A 165-amino-acid chain; its full sequence is Nucleotide-binding protein TGRD_519 (165 aa).

This sequence belongs to the YajQ family.

Its function is as follows. Nucleotide-binding protein. This is Nucleotide-binding protein TGRD_519 from Endomicrobium trichonymphae.